The following is a 513-amino-acid chain: Putative GMP synthase [glutamine-hydrolyzing] (513 aa).

Positions 8–198 (MIVVLDFGGQ…AFAVCGCEGN (191 aa)) constitute a Glutamine amidotransferase type-1 domain. The active-site Nucleophile is the C85. The active site involves E174. Residues 199 to 388 (WSMENFIELE…LGIPDEVVWR (190 aa)) enclose the GMPS ATP-PPase domain. 226-232 (SGGVDSS) contributes to the ATP binding site.

In terms of assembly, homodimer.

It catalyses the reaction XMP + L-glutamine + ATP + H2O = GMP + L-glutamate + AMP + diphosphate + 2 H(+). It participates in purine metabolism; GMP biosynthesis; GMP from XMP (L-Gln route): step 1/1. Catalyzes the synthesis of GMP from XMP. This Halalkalibacterium halodurans (strain ATCC BAA-125 / DSM 18197 / FERM 7344 / JCM 9153 / C-125) (Bacillus halodurans) protein is Putative GMP synthase [glutamine-hydrolyzing] (guaA).